We begin with the raw amino-acid sequence, 649 residues long: tRNA-guanine(15) transglycosylase (649 aa).

The active-site Nucleophile is the D88. D123 and A194 together coordinate substrate. Zn(2+) is bound by residues C280, C282, and C285. A PUA domain is found at 573–648 (NYRIVIDSSV…VAATLRGGIK (76 aa)).

Belongs to the archaeosine tRNA-ribosyltransferase family. The cofactor is Zn(2+).

The enzyme catalyses guanosine(15) in tRNA + 7-cyano-7-deazaguanine = 7-cyano-7-carbaguanosine(15) in tRNA + guanine. Its pathway is tRNA modification; archaeosine-tRNA biosynthesis. In terms of biological role, exchanges the guanine residue with 7-cyano-7-deazaguanine (preQ0) at position 15 in the dihydrouridine loop (D-loop) of archaeal tRNAs. This Methanococcus maripaludis (strain C5 / ATCC BAA-1333) protein is tRNA-guanine(15) transglycosylase.